Reading from the N-terminus, the 183-residue chain is Apo-citrate lyase phosphoribosyl-dephospho-CoA transferase (183 aa).

Belongs to the CitX family.

The enzyme catalyses apo-[citrate lyase ACP] + 2'-(5''-triphospho-alpha-D-ribosyl)-3'-dephospho-CoA = holo-[citrate lyase ACP] + diphosphate. Transfers 2-(5''-triphosphoribosyl)-3'-dephosphocoenzyme-A on a serine residue to the apo-acyl carrier protein (gamma chain) of the citrate lyase to yield holo-acyl carrier protein. This is Apo-citrate lyase phosphoribosyl-dephospho-CoA transferase from Escherichia coli O45:K1 (strain S88 / ExPEC).